The following is a 128-amino-acid chain: Ribosome-binding factor A (128 aa).

This sequence belongs to the RbfA family. As to quaternary structure, monomer. Binds 30S ribosomal subunits, but not 50S ribosomal subunits or 70S ribosomes.

Its subcellular location is the cytoplasm. In terms of biological role, one of several proteins that assist in the late maturation steps of the functional core of the 30S ribosomal subunit. Associates with free 30S ribosomal subunits (but not with 30S subunits that are part of 70S ribosomes or polysomes). Required for efficient processing of 16S rRNA. May interact with the 5'-terminal helix region of 16S rRNA. The chain is Ribosome-binding factor A from Geobacillus thermodenitrificans (strain NG80-2).